The sequence spans 92 residues: MSQSRPLALLVVAALVAAAVLVAAAEAQQADGNKLEGLADALKYLQELDRYYSQVARPRFGKRAELRPDVVDDVIPEEMSADKFWRRFARRR.

The signal sequence occupies residues 1–27 (MSQSRPLALLVVAALVAAAVLVAAAEA). Positions 28–51 (QQADGNKLEGLADALKYLQELDRY) are excised as a propeptide. Phenylalanine amide is present on Phe-60. Residues 64 to 92 (AELRPDVVDDVIPEEMSADKFWRRFARRR) constitute a propeptide that is removed on maturation.

This sequence belongs to the NPY family. As to expression, widely expressed in the nervous system. Expressed in corpora cardiaca, hypocerebral ganglion, frontal ganglion, protocerebrum, antennal lobe, tritocerebrum and thoracic ganglia. Not detected in corpora allata, pars intercerebralis, circumesophageal connectives, subesophageal ganglion, abdominal ganglion and abdominal perisympathetic organs.

The protein localises to the secreted. Functionally, accelerates ovarian maturation in females. This is Neuropeptide F from Locusta migratoria (Migratory locust).